A 300-amino-acid polypeptide reads, in one-letter code: uncharacterized protein (300 aa).

His274 acts as the Proton acceptor in catalysis.

The protein belongs to the AB hydrolase superfamily. In terms of assembly, monomer.

The catalysed reaction is a carboxylic ester + H2O = an alcohol + a carboxylate + H(+). This is an uncharacterized protein from Bacillus subtilis (strain 168).